The sequence spans 336 residues: COP9 signalosome complex subunit 5 (336 aa).

An MPN domain is found at 44 to 181 (VRISSVAMIK…IGAFRTIPEG (138 aa)). 3 residues coordinate Zn(2+): H127, H129, and D140. A JAMM motif motif is present at residues 127–140 (HSHPGYGCWLSGID).

Belongs to the peptidase M67A family. CSN5 subfamily. Component of the COP9 signalosome (CSN) complex.

The protein localises to the cytoplasm. It localises to the nucleus. Its function is as follows. Catalytic component of the COP9 signalosome (CSN) complex that acts as an regulator of the ubiquitin (Ubl) conjugation pathway by mediating the deneddylation of the cullin subunit of SCF-type E3 ubiquitin-protein ligase complexes. The CSN complex is involved in the regulation of the circadian clock through its control of the stability of the SCF(FWD-1) complex. The chain is COP9 signalosome complex subunit 5 (csn-5) from Neurospora crassa (strain ATCC 24698 / 74-OR23-1A / CBS 708.71 / DSM 1257 / FGSC 987).